Here is a 194-residue protein sequence, read N- to C-terminus: Phosphoheptose isomerase (194 aa).

Positions 37–194 constitute an SIS domain; the sequence is ISNSFKQGGK…LIEFEMAKQA (158 aa). A substrate-binding site is contributed by 52–54; sequence NGG. Zn(2+) contacts are provided by H61 and E65. Residues E65, 93–94, 119–121, S124, and Q172 each bind substrate; these read ND and STS. Positions 172 and 180 each coordinate Zn(2+).

The protein belongs to the SIS family. GmhA subfamily. As to quaternary structure, homotetramer. The cofactor is Zn(2+).

Its subcellular location is the cytoplasm. It catalyses the reaction 2 D-sedoheptulose 7-phosphate = D-glycero-alpha-D-manno-heptose 7-phosphate + D-glycero-beta-D-manno-heptose 7-phosphate. It functions in the pathway carbohydrate biosynthesis; D-glycero-D-manno-heptose 7-phosphate biosynthesis; D-glycero-alpha-D-manno-heptose 7-phosphate and D-glycero-beta-D-manno-heptose 7-phosphate from sedoheptulose 7-phosphate: step 1/1. In terms of biological role, catalyzes the isomerization of sedoheptulose 7-phosphate in D-glycero-D-manno-heptose 7-phosphate. The sequence is that of Phosphoheptose isomerase from Actinobacillus pleuropneumoniae serotype 5b (strain L20).